The primary structure comprises 264 residues: 3-methyl-2-oxobutanoate hydroxymethyltransferase (264 aa).

Mg(2+)-binding residues include D43 and D82. Residues 43–44 (DS), D82, and K111 each bind 3-methyl-2-oxobutanoate. E113 contacts Mg(2+). Catalysis depends on E180, which acts as the Proton acceptor.

Belongs to the PanB family. As to quaternary structure, homodecamer; pentamer of dimers. Mg(2+) serves as cofactor.

It is found in the cytoplasm. The enzyme catalyses 3-methyl-2-oxobutanoate + (6R)-5,10-methylene-5,6,7,8-tetrahydrofolate + H2O = 2-dehydropantoate + (6S)-5,6,7,8-tetrahydrofolate. It functions in the pathway cofactor biosynthesis; (R)-pantothenate biosynthesis; (R)-pantoate from 3-methyl-2-oxobutanoate: step 1/2. Its function is as follows. Catalyzes the reversible reaction in which hydroxymethyl group from 5,10-methylenetetrahydrofolate is transferred onto alpha-ketoisovalerate to form ketopantoate. The sequence is that of 3-methyl-2-oxobutanoate hydroxymethyltransferase from Campylobacter fetus subsp. fetus (strain 82-40).